Reading from the N-terminus, the 122-residue chain is Large ribosomal subunit protein uL14 (122 aa).

The protein belongs to the universal ribosomal protein uL14 family. Part of the 50S ribosomal subunit. Forms a cluster with proteins L3 and L19. In the 70S ribosome, L14 and L19 interact and together make contacts with the 16S rRNA in bridges B5 and B8.

In terms of biological role, binds to 23S rRNA. Forms part of two intersubunit bridges in the 70S ribosome. The chain is Large ribosomal subunit protein uL14 from Pseudothermotoga lettingae (strain ATCC BAA-301 / DSM 14385 / NBRC 107922 / TMO) (Thermotoga lettingae).